The chain runs to 182 residues: Bifunctional protein PyrR (182 aa).

Residues 99 to 111 (IVLVDDVIFTGRT) carry the PRPP-binding motif.

This sequence belongs to the purine/pyrimidine phosphoribosyltransferase family. PyrR subfamily. As to quaternary structure, homodimer and homohexamer; in equilibrium.

The catalysed reaction is UMP + diphosphate = 5-phospho-alpha-D-ribose 1-diphosphate + uracil. Functionally, regulates transcriptional attenuation of the pyrimidine nucleotide (pyr) operon by binding in a uridine-dependent manner to specific sites on pyr mRNA. This disrupts an antiterminator hairpin in the RNA and favors formation of a downstream transcription terminator, leading to a reduced expression of downstream genes. In terms of biological role, also displays a weak uracil phosphoribosyltransferase activity which is not physiologically significant. This chain is Bifunctional protein PyrR, found in Caldicellulosiruptor saccharolyticus (strain ATCC 43494 / DSM 8903 / Tp8T 6331).